We begin with the raw amino-acid sequence, 326 residues long: Small ribosomal subunit biogenesis GTPase RsgA (326 aa).

The 162-residue stretch at 80–241 (LSHQMHIIAS…IIDTPGIKGF (162 aa)) folds into the CP-type G domain. Residues 129–132 (NKID) and 183–191 (GHSGVGKST) contribute to the GTP site. Zn(2+)-binding residues include cysteine 265, cysteine 270, histidine 272, and cysteine 278.

It belongs to the TRAFAC class YlqF/YawG GTPase family. RsgA subfamily. In terms of assembly, monomer. Associates with 30S ribosomal subunit, binds 16S rRNA. The cofactor is Zn(2+).

Its subcellular location is the cytoplasm. Its function is as follows. One of several proteins that assist in the late maturation steps of the functional core of the 30S ribosomal subunit. Helps release RbfA from mature subunits. May play a role in the assembly of ribosomal proteins into the subunit. Circularly permuted GTPase that catalyzes slow GTP hydrolysis, GTPase activity is stimulated by the 30S ribosomal subunit. This Flavobacterium psychrophilum (strain ATCC 49511 / DSM 21280 / CIP 103535 / JIP02/86) protein is Small ribosomal subunit biogenesis GTPase RsgA.